The sequence spans 474 residues: UDP-N-acetylmuramate--L-alanine ligase (474 aa).

Residue 122–128 (GTHGKTT) coordinates ATP.

This sequence belongs to the MurCDEF family.

It localises to the cytoplasm. The enzyme catalyses UDP-N-acetyl-alpha-D-muramate + L-alanine + ATP = UDP-N-acetyl-alpha-D-muramoyl-L-alanine + ADP + phosphate + H(+). It functions in the pathway cell wall biogenesis; peptidoglycan biosynthesis. In terms of biological role, cell wall formation. This chain is UDP-N-acetylmuramate--L-alanine ligase, found in Saccharophagus degradans (strain 2-40 / ATCC 43961 / DSM 17024).